The chain runs to 168 residues: MPLLDSFKVDHTRMHAPAVRVAKTMTTPKGDTITVFDLRFCIPNKEILPEKGIHTLEHLFAGFMRDHLNGNGVEIIDISPMGCRTGFYMSLIGTPSEQQVADAWLASMQDVGNVKDQSKIPELNEYQCGTYQMHSLAEAQQIAQNVLARKVAVNKNEELTLDEGLLNA.

Residues His-54, His-58, and Cys-128 each contribute to the Fe cation site.

The protein belongs to the LuxS family. As to quaternary structure, homodimer. Fe cation serves as cofactor.

It catalyses the reaction S-(5-deoxy-D-ribos-5-yl)-L-homocysteine = (S)-4,5-dihydroxypentane-2,3-dione + L-homocysteine. Functionally, involved in the synthesis of autoinducer 2 (AI-2) which is secreted by bacteria and is used to communicate both the cell density and the metabolic potential of the environment. The regulation of gene expression in response to changes in cell density is called quorum sensing. Catalyzes the transformation of S-ribosylhomocysteine (RHC) to homocysteine (HC) and 4,5-dihydroxy-2,3-pentadione (DPD). In Neisseria meningitidis serogroup C / serotype 2a (strain ATCC 700532 / DSM 15464 / FAM18), this protein is S-ribosylhomocysteine lyase.